The sequence spans 431 residues: tRNA(Ile)-lysidine synthase (431 aa).

20-25 contacts ATP; it reads SGGLDS.

This sequence belongs to the tRNA(Ile)-lysidine synthase family.

It is found in the cytoplasm. It catalyses the reaction cytidine(34) in tRNA(Ile2) + L-lysine + ATP = lysidine(34) in tRNA(Ile2) + AMP + diphosphate + H(+). Its function is as follows. Ligates lysine onto the cytidine present at position 34 of the AUA codon-specific tRNA(Ile) that contains the anticodon CAU, in an ATP-dependent manner. Cytidine is converted to lysidine, thus changing the amino acid specificity of the tRNA from methionine to isoleucine. The protein is tRNA(Ile)-lysidine synthase of Escherichia coli O157:H7.